Reading from the N-terminus, the 473-residue chain is H(+)/Cl(-) exchange transporter ClcA (473 aa).

The Cytoplasmic portion of the chain corresponds to 1 to 32; that stretch reads MKTDTPSLETPQAARLRRRQLIRQLLERDKTP. Residues 33 to 69 traverse the membrane as a helical segment; sequence LAILFMAAVVGTLVGLAAVAFDKGVAWLQNQRMGALV. The Periplasmic portion of the chain corresponds to 70 to 76; sequence HTADNYP. The chain crosses the membrane as a helical span at residues 77–100; the sequence is LLLTVAFLCSAVLAMFGYFLVRKY. The Selectivity filter part_1 motif lies at 106–110; that stretch reads GSGIP. Serine 107 serves as a coordination point for chloride. The helical intramembrane region spans 109–116; sequence IPEIEGAL. Residues 117–123 lie on the Cytoplasmic side of the membrane; sequence EDQRPVR. 2 helical membrane-spanning segments follow: residues 124 to 141 and 148 to 166; these read WWRV…TLGG and EGPT…LDVF. The Selectivity filter part_2 signature appears at 146–150; that stretch reads GREGP. Residues 167–176 lie on the Cytoplasmic side of the membrane; the sequence is RLKGDEARHT. 2 consecutive intramembrane regions (helical) follow at residues 177-189 and 193-201; these read LLAT…LAAA and PLAGILFII. Residues 202–214 are Cytoplasmic-facing; it reads EEMRPQFRYTLIS. A helical transmembrane segment spans residues 215-232; sequence IKAVFIGVIMSTIMYRIF. Residues 233–252 are Periplasmic-facing; it reads NHEVALIDVGKLSDAPLNTL. Residues 253 to 281 traverse the membrane as a helical segment; the sequence is WLYLILGIIFGIFGPIFNKWVLGMQDLLH. Over 282 to 287 the chain is Cytoplasmic; sequence RVHGGN. Residues 288–309 form a helical membrane-spanning segment; it reads ITKWVLMGGAIGGLCGLLGFVA. Residues 310-329 lie on the Periplasmic side of the membrane; that stretch reads PATSGGGFNLIPIATAGNFS. 2 helical membrane passes run 330-349 and 355-376; these read MGML…LCFS and GIFA…MVAV. A Selectivity filter part_3 motif is present at residues 355 to 359; sequence GIFAP. Chloride is bound by residues isoleucine 356 and phenylalanine 357. The Periplasmic segment spans residues 377 to 386; the sequence is ELFPQYHLEA. Positions 387 to 401 form an intramembrane region, helical; sequence GTFAIAGMGALLAAS. An intramembrane region (note=Loop between two helices) is located at residues 402–404; the sequence is IRA. An intramembrane region (helical) is located at residues 405–416; sequence PLTGIILVLEMT. An intramembrane region (note=Loop between two helices) is located at residues 417–421; it reads DNYQL. The helical transmembrane segment at 422–438 threads the bilayer; sequence ILPMIITGLGATLLAQF. Over 439-473 the chain is Cytoplasmic; the sequence is TGGKPLYSAILARTLAKQEAEQLARSKAASARENT. Residue tyrosine 445 participates in chloride binding.

The protein belongs to the chloride channel (TC 2.A.49) family. ClcA subfamily. In terms of assembly, homodimer.

The protein localises to the cell inner membrane. The enzyme catalyses 2 chloride(in) + H(+)(out) = 2 chloride(out) + H(+)(in). In terms of biological role, proton-coupled chloride transporter. Functions as antiport system and exchanges two chloride ions for 1 proton. Probably acts as an electrical shunt for an outwardly-directed proton pump that is linked to amino acid decarboxylation, as part of the extreme acid resistance (XAR) response. This Escherichia coli O45:K1 (strain S88 / ExPEC) protein is H(+)/Cl(-) exchange transporter ClcA.